A 361-amino-acid polypeptide reads, in one-letter code: Chorismate synthase (361 aa).

R48 contacts NADP(+). FMN contacts are provided by residues 126–128, G269, 302–306, and N328; these read RSS and KPVPS.

The protein belongs to the chorismate synthase family. Homotetramer. FMNH2 serves as cofactor.

It carries out the reaction 5-O-(1-carboxyvinyl)-3-phosphoshikimate = chorismate + phosphate. It functions in the pathway metabolic intermediate biosynthesis; chorismate biosynthesis; chorismate from D-erythrose 4-phosphate and phosphoenolpyruvate: step 7/7. Its function is as follows. Catalyzes the anti-1,4-elimination of the C-3 phosphate and the C-6 proR hydrogen from 5-enolpyruvylshikimate-3-phosphate (EPSP) to yield chorismate, which is the branch point compound that serves as the starting substrate for the three terminal pathways of aromatic amino acid biosynthesis. This reaction introduces a second double bond into the aromatic ring system. The chain is Chorismate synthase from Treponema denticola (strain ATCC 35405 / DSM 14222 / CIP 103919 / JCM 8153 / KCTC 15104).